The sequence spans 931 residues: Glycine dehydrogenase (decarboxylating) (931 aa).

Lys684 carries the post-translational modification N6-(pyridoxal phosphate)lysine.

This sequence belongs to the GcvP family. As to quaternary structure, the glycine cleavage system is composed of four proteins: P, T, L and H. Pyridoxal 5'-phosphate serves as cofactor.

The enzyme catalyses N(6)-[(R)-lipoyl]-L-lysyl-[glycine-cleavage complex H protein] + glycine + H(+) = N(6)-[(R)-S(8)-aminomethyldihydrolipoyl]-L-lysyl-[glycine-cleavage complex H protein] + CO2. In terms of biological role, the glycine cleavage system catalyzes the degradation of glycine. The P protein binds the alpha-amino group of glycine through its pyridoxal phosphate cofactor; CO(2) is released and the remaining methylamine moiety is then transferred to the lipoamide cofactor of the H protein. This is Glycine dehydrogenase (decarboxylating) from Bartonella henselae (strain ATCC 49882 / DSM 28221 / CCUG 30454 / Houston 1) (Rochalimaea henselae).